The sequence spans 213 residues: Calcium-dependent cell adhesion molecule 1 (213 aa).

Repeat copies occupy residues 1–48 (MSVD…LVGS), 49–97 (NVRC…GAFQ), 98–146 (WAVD…LTPP), and 147–194 (DSEI…FPKN). Positions 1–194 (MSVDANKVKF…IKKDETFPKN (194 aa)) are 4 X approximate tandem repeats.

It belongs to the Dictyostelium CAD family. In terms of processing, the N-terminus is blocked.

Its subcellular location is the cell membrane. In terms of biological role, mediates calcium-dependent cell-cell adhesion during the early stage of development. This Dictyostelium discoideum (Social amoeba) protein is Calcium-dependent cell adhesion molecule 1 (cadA).